Reading from the N-terminus, the 423-residue chain is Glucose-1-phosphate adenylyltransferase (423 aa).

Residues Tyr-98, Gly-163, Glu-178–Lys-179, and Ser-189 each bind alpha-D-glucose 1-phosphate.

This sequence belongs to the bacterial/plant glucose-1-phosphate adenylyltransferase family. As to quaternary structure, homotetramer.

The catalysed reaction is alpha-D-glucose 1-phosphate + ATP + H(+) = ADP-alpha-D-glucose + diphosphate. Its pathway is glycan biosynthesis; glycogen biosynthesis. Functionally, involved in the biosynthesis of ADP-glucose, a building block required for the elongation reactions to produce glycogen. Catalyzes the reaction between ATP and alpha-D-glucose 1-phosphate (G1P) to produce pyrophosphate and ADP-Glc. In Thermotoga maritima (strain ATCC 43589 / DSM 3109 / JCM 10099 / NBRC 100826 / MSB8), this protein is Glucose-1-phosphate adenylyltransferase.